The sequence spans 189 residues: 3-isopropylmalate dehydratase small subunit (189 aa).

Belongs to the LeuD family. LeuD type 1 subfamily. In terms of assembly, heterodimer of LeuC and LeuD.

The enzyme catalyses (2R,3S)-3-isopropylmalate = (2S)-2-isopropylmalate. It participates in amino-acid biosynthesis; L-leucine biosynthesis; L-leucine from 3-methyl-2-oxobutanoate: step 2/4. Catalyzes the isomerization between 2-isopropylmalate and 3-isopropylmalate, via the formation of 2-isopropylmaleate. The polypeptide is 3-isopropylmalate dehydratase small subunit (Francisella tularensis subsp. holarctica (strain FTNF002-00 / FTA)).